An 88-amino-acid chain; its full sequence is Small ribosomal subunit protein uS15c (88 aa).

Belongs to the universal ribosomal protein uS15 family. Part of the 30S ribosomal subunit.

Its subcellular location is the plastid. The protein localises to the chloroplast. This chain is Small ribosomal subunit protein uS15c (rps15), found in Aethionema cordifolium (Lebanon stonecress).